The chain runs to 295 residues: MDDHAADLLAAVAEVARAAEAADGAAPLDEATWLALRHHPERVRSWVRAGGFALVIGADLSLVVHPQARGRGLGAGLLSSALAGLSAGMPLEAWSHGDHPAAAALARSHGFERARELWVMRRQMASALPQLRAPDGVTVRAFRADSGDAEEVLRVNAAAFAHHPEQGSMDATNLAERMAEPWFDPDGLLLATSAAADGGEQVLGFHWTKVHPGDAGAGAGPGVEVGEVYVVGIDPAAQGRGLGKVLTLAGLHHLAGRGVPEVLLYVESDNRPAIAVYAGLGFTHADDDTHVQYRR.

Glutamate 30 lines the 1D-myo-inositol 2-(L-cysteinylamino)-2-deoxy-alpha-D-glucopyranoside pocket. Residue 62–64 (LVV) participates in acetyl-CoA binding. An N-acetyltransferase domain is found at 137-295 (VTVRAFRADS…DDDTHVQYRR (159 aa)). Residues glutamate 165, lysine 209, and glutamate 227 each coordinate 1D-myo-inositol 2-(L-cysteinylamino)-2-deoxy-alpha-D-glucopyranoside. Acetyl-CoA is bound by residues 231–233 (VGI) and 238–244 (QGRGLGK). A 1D-myo-inositol 2-(L-cysteinylamino)-2-deoxy-alpha-D-glucopyranoside-binding site is contributed by tyrosine 265.

Belongs to the acetyltransferase family. MshD subfamily. Monomer.

The catalysed reaction is 1D-myo-inositol 2-(L-cysteinylamino)-2-deoxy-alpha-D-glucopyranoside + acetyl-CoA = mycothiol + CoA + H(+). In terms of biological role, catalyzes the transfer of acetyl from acetyl-CoA to desacetylmycothiol (Cys-GlcN-Ins) to form mycothiol. The polypeptide is Mycothiol acetyltransferase (Nocardioides sp. (strain ATCC BAA-499 / JS614)).